The chain runs to 312 residues: Glycine--tRNA ligase alpha subunit (312 aa).

Belongs to the class-II aminoacyl-tRNA synthetase family. Tetramer of two alpha and two beta subunits.

The protein localises to the cytoplasm. It catalyses the reaction tRNA(Gly) + glycine + ATP = glycyl-tRNA(Gly) + AMP + diphosphate. This chain is Glycine--tRNA ligase alpha subunit, found in Methylobacillus flagellatus (strain ATCC 51484 / DSM 6875 / VKM B-1610 / KT).